Here is an 89-residue protein sequence, read N- to C-terminus: Small ribosomal subunit protein uS19 (89 aa).

The protein belongs to the universal ribosomal protein uS19 family.

In terms of biological role, protein S19 forms a complex with S13 that binds strongly to the 16S ribosomal RNA. This is Small ribosomal subunit protein uS19 from Porphyromonas gingivalis (strain ATCC 33277 / DSM 20709 / CIP 103683 / JCM 12257 / NCTC 11834 / 2561).